Consider the following 284-residue polypeptide: tRNA-cytidine(32) 2-sulfurtransferase (284 aa).

A compositionally biased stretch (polar residues) spans 1-11; the sequence is MTFHQPVSETA. The disordered stretch occupies residues 1–20; sequence MTFHQPVSETAQPDEASGHP. Positions 63-68 match the PP-loop motif motif; sequence SGGKDS. Positions 138, 141, and 229 each coordinate [4Fe-4S] cluster.

The protein belongs to the TtcA family. As to quaternary structure, homodimer. Mg(2+) serves as cofactor. The cofactor is [4Fe-4S] cluster.

It localises to the cytoplasm. It carries out the reaction cytidine(32) in tRNA + S-sulfanyl-L-cysteinyl-[cysteine desulfurase] + AH2 + ATP = 2-thiocytidine(32) in tRNA + L-cysteinyl-[cysteine desulfurase] + A + AMP + diphosphate + H(+). Its pathway is tRNA modification. Catalyzes the ATP-dependent 2-thiolation of cytidine in position 32 of tRNA, to form 2-thiocytidine (s(2)C32). The sulfur atoms are provided by the cysteine/cysteine desulfurase (IscS) system. The sequence is that of tRNA-cytidine(32) 2-sulfurtransferase from Chelativorans sp. (strain BNC1).